The following is a 143-amino-acid chain: Putative pre-16S rRNA nuclease (143 aa).

This sequence belongs to the YqgF nuclease family.

The protein localises to the cytoplasm. Could be a nuclease involved in processing of the 5'-end of pre-16S rRNA. This Leuconostoc citreum (strain KM20) protein is Putative pre-16S rRNA nuclease.